The sequence spans 107 residues: Snaclec VP12 subunit A (107 aa).

2 disulfides stabilise this stretch: Cys4–Cys15 and Cys32–Cys107. Residues 11–107 (YEGNCYKAFD…ECGLAYPFIC (97 aa)) enclose the C-type lectin domain.

It belongs to the snaclec family. In terms of assembly, heterodimer of subunits alpha and beta; disulfide-linked. In terms of tissue distribution, expressed by the venom gland.

It is found in the secreted. Inhibits integrin alpha-2/beta-1- (ITGA2/ITGB1) dependent melanoma metastasis. This is Snaclec VP12 subunit A from Daboia palaestinae (Palestine viper).